A 485-amino-acid chain; its full sequence is Glutamyl-tRNA(Gln) amidotransferase subunit A (485 aa).

Residues Lys-76 and Ser-152 each act as charge relay system in the active site. The active-site Acyl-ester intermediate is Ser-176.

The protein belongs to the amidase family. GatA subfamily. As to quaternary structure, heterotrimer of A, B and C subunits.

The catalysed reaction is L-glutamyl-tRNA(Gln) + L-glutamine + ATP + H2O = L-glutaminyl-tRNA(Gln) + L-glutamate + ADP + phosphate + H(+). Its function is as follows. Allows the formation of correctly charged Gln-tRNA(Gln) through the transamidation of misacylated Glu-tRNA(Gln) in organisms which lack glutaminyl-tRNA synthetase. The reaction takes place in the presence of glutamine and ATP through an activated gamma-phospho-Glu-tRNA(Gln). This Dechloromonas aromatica (strain RCB) protein is Glutamyl-tRNA(Gln) amidotransferase subunit A.